Reading from the N-terminus, the 437-residue chain is Elongation factor 1-gamma (437 aa).

N-acetylalanine is present on Ala-2. One can recognise a GST N-terminal domain in the interval 2 to 87 (AAGTLYTYPE…YVSNEELRGS (86 aa)). The GST C-terminal domain maps to 88-216 (TPEAAAQVVQ…VKLCEKMAQF (129 aa)). N6-acetyllysine is present on residues Lys-147 and Lys-212. Basic and acidic residues predominate over residues 221 to 254 (FAESQPKKDTPRKEKGSREEKQKPQAERKEEKKA). Residues 221–268 (FAESQPKKDTPRKEKGSREEKQKPQAERKEEKKAAAPAPEEEMDECEQ) form a disordered region. Lys-253 participates in a covalent cross-link: Glycyl lysine isopeptide (Lys-Gly) (interchain with G-Cter in SUMO1). The EF-1-gamma C-terminal domain maps to 276–437 (AKDPFAHLPK…KAVNQGKIFK (162 aa)). Lys-285 is covalently cross-linked (Glycyl lysine isopeptide (Lys-Gly) (interchain with G-Cter in SUMO2)). The residue at position 401 (Lys-401) is an N6-acetyllysine. Lys-434 is modified (N6-acetyllysine; alternate). Residue Lys-434 is modified to N6-malonyllysine; alternate.

As to quaternary structure, EF-1 is composed of four subunits: alpha, beta, delta, and gamma.

Probably plays a role in anchoring the complex to other cellular components. In Mus musculus (Mouse), this protein is Elongation factor 1-gamma (Eef1g).